A 255-amino-acid polypeptide reads, in one-letter code: Adenosylcobinamide-GDP ribazoletransferase (255 aa).

7 helical membrane-spanning segments follow: residues 33–53 (IFLPAYGLVTGGILALIIELF), 57–77 (FPGFFWAGVIIAGQIYLSGAL), 107–127 (VGSMAVAFFGAFLILKYGSYA), 136–156 (FTVLISEIILRGTGYLVIYSF), 174–194 (AGLIFTLGQTLIFTLGAAAFF), 196–216 (FSLIKILIILLLAYLFAFVVA), and 234–254 (IMELTGLFVPVAVLLINNIGV).

Belongs to the CobS family. Mg(2+) serves as cofactor.

It is found in the cell membrane. The catalysed reaction is alpha-ribazole + adenosylcob(III)inamide-GDP = adenosylcob(III)alamin + GMP + H(+). It carries out the reaction alpha-ribazole 5'-phosphate + adenosylcob(III)inamide-GDP = adenosylcob(III)alamin 5'-phosphate + GMP + H(+). It functions in the pathway cofactor biosynthesis; adenosylcobalamin biosynthesis; adenosylcobalamin from cob(II)yrinate a,c-diamide: step 7/7. Its function is as follows. Joins adenosylcobinamide-GDP and alpha-ribazole to generate adenosylcobalamin (Ado-cobalamin). Also synthesizes adenosylcobalamin 5'-phosphate from adenosylcobinamide-GDP and alpha-ribazole 5'-phosphate. This Carboxydothermus hydrogenoformans (strain ATCC BAA-161 / DSM 6008 / Z-2901) protein is Adenosylcobinamide-GDP ribazoletransferase.